Consider the following 117-residue polypeptide: Large ribosomal subunit protein uL18 (117 aa).

It belongs to the universal ribosomal protein uL18 family. As to quaternary structure, part of the 50S ribosomal subunit; part of the 5S rRNA/L5/L18/L25 subcomplex. Contacts the 5S and 23S rRNAs.

In terms of biological role, this is one of the proteins that bind and probably mediate the attachment of the 5S RNA into the large ribosomal subunit, where it forms part of the central protuberance. This Francisella tularensis subsp. tularensis (strain FSC 198) protein is Large ribosomal subunit protein uL18.